The sequence spans 110 residues: Senescence associated gene 20 (110 aa).

In Arabidopsis thaliana (Mouse-ear cress), this protein is Senescence associated gene 20.